The following is a 771-amino-acid chain: Probable cation-transporting ATPase G (771 aa).

Residues 19–86 enclose the HMA domain; it reads GRMRVQATGF…AIIDAETVPA (68 aa). Residues 72–92 traverse the membrane as a helical segment; that stretch reads AAILSAIIDAETVPAAAVPAY. Residues 122-143 are disordered; it reads DVAAQPSGETSDACCDGEDNED. Helical transmembrane passes span 163-183, 209-229, 330-350, 387-407, and 411-431; these read VLLT…VVLG, VGVG…GELG, VFAG…ATAA, MIAA…LVWI, and LVVL…VTVV. Asp-462 (4-aspartylphosphate intermediate) is an active-site residue. Residues Asp-651 and Asp-655 each contribute to the Mg(2+) site. 2 helical membrane-spanning segments follow: residues 657–677 and 716–736; these read PALA…DVAI and IITV…AVVL.

It belongs to the cation transport ATPase (P-type) (TC 3.A.3) family. Type IB subfamily.

Its subcellular location is the cell membrane. It catalyses the reaction ATP + H2O = ADP + phosphate + H(+). The sequence is that of Probable cation-transporting ATPase G (ctpG) from Mycobacterium bovis (strain ATCC BAA-935 / AF2122/97).